We begin with the raw amino-acid sequence, 644 residues long: Threonine--tRNA ligase (644 aa).

Residues 1-61 (MINVTLPDGS…DGDAQVAIIT (61 aa)) enclose the TGS domain. The interval 243–536 (DHRKLGKQME…LIESYAGKLP (294 aa)) is catalytic. Cys-336, His-387, and His-513 together coordinate Zn(2+).

It belongs to the class-II aminoacyl-tRNA synthetase family. As to quaternary structure, homodimer. It depends on Zn(2+) as a cofactor.

The protein resides in the cytoplasm. The catalysed reaction is tRNA(Thr) + L-threonine + ATP = L-threonyl-tRNA(Thr) + AMP + diphosphate + H(+). Catalyzes the attachment of threonine to tRNA(Thr) in a two-step reaction: L-threonine is first activated by ATP to form Thr-AMP and then transferred to the acceptor end of tRNA(Thr). Also edits incorrectly charged L-seryl-tRNA(Thr). This Maricaulis maris (strain MCS10) (Caulobacter maris) protein is Threonine--tRNA ligase.